A 218-amino-acid polypeptide reads, in one-letter code: Glutathione S-transferase U24 (218 aa).

The 80-residue stretch at 3-82 folds into the GST N-terminal domain; the sequence is DEVILLDFWA…YIDETWPDNN (80 aa). Residues 13 to 14, 39 to 40, 53 to 54, and 66 to 67 each bind glutathione; these read SM, NK, KI, and ES. A GST C-terminal domain is found at 88–215; that stretch reads DPYKRAHAKF…TFISERRKKL (128 aa). T148 carries the post-translational modification Phosphothreonine.

The protein belongs to the GST superfamily. Tau family.

The protein localises to the cytoplasm. The protein resides in the cytosol. It carries out the reaction RX + glutathione = an S-substituted glutathione + a halide anion + H(+). May be involved in the conjugation of reduced glutathione to a wide number of exogenous and endogenous hydrophobic electrophiles and have a detoxification role against certain herbicides. The sequence is that of Glutathione S-transferase U24 (GSTU24) from Arabidopsis thaliana (Mouse-ear cress).